The primary structure comprises 919 residues: Aminodeoxychorismate synthase, chloroplastic (919 aa).

Residues methionine 1 to arginine 45 constitute a chloroplast transit peptide. Residues arginine 86 to arginine 342 enclose the Glutamine amidotransferase type-1 domain. The Nucleophile role is filled by cysteine 172. Residues histidine 316 and glutamate 318 contribute to the active site. Residues isoleucine 436–methionine 910 form a PABB component region.

It in the C-terminal section; belongs to the anthranilate synthase component I family.

It is found in the plastid. The protein resides in the chloroplast. It carries out the reaction chorismate + L-glutamine = 4-amino-4-deoxychorismate + L-glutamate. It participates in cofactor biosynthesis; tetrahydrofolate biosynthesis; 4-aminobenzoate from chorismate: step 1/2. Activated by chorismate and inhibited by dihydrofolate and methotrexate. Its function is as follows. Bifunctional enzyme that catalyzes the biosynthesis of 4-amino-4-deoxychorismate (ADC) from chorismate and glutamine. In the first step, a glutamine amidotransferase generates ammonia that is channelled between the binding sites of glutamine and chorismate and used along with chorismate in the second step, catalyzed by aminodeoxychorismate synthase, to produce ADC. Required for the synthesis of 4-aminobenzoate (PABA), an important component in tetrahydrofolate biosynthesis. Does not possess ADC lyase activity. The chain is Aminodeoxychorismate synthase, chloroplastic (ADCS) from Arabidopsis thaliana (Mouse-ear cress).